The chain runs to 201 residues: Large ribosomal subunit protein uL4 (201 aa).

A disordered region spans residues 46–71 (QKTRAEVVGSGKKPWRQKGTGRARAG).

The protein belongs to the universal ribosomal protein uL4 family. Part of the 50S ribosomal subunit.

Its function is as follows. One of the primary rRNA binding proteins, this protein initially binds near the 5'-end of the 23S rRNA. It is important during the early stages of 50S assembly. It makes multiple contacts with different domains of the 23S rRNA in the assembled 50S subunit and ribosome. Functionally, forms part of the polypeptide exit tunnel. The polypeptide is Large ribosomal subunit protein uL4 (Shewanella woodyi (strain ATCC 51908 / MS32)).